The following is a 513-amino-acid chain: Xylose import ATP-binding protein XylG (513 aa).

ABC transporter domains lie at 5-242 (LEMK…VGRE) and 259-505 (LRIE…LRSE). Residue 37–44 (GENGSGKS) coordinates ATP.

The protein belongs to the ABC transporter superfamily. Xylose importer (TC 3.A.1.2.4) family. In terms of assembly, the complex is composed of two ATP-binding proteins (XylG), two transmembrane proteins (XylH) and a solute-binding protein (XylF).

The protein localises to the cell inner membrane. It catalyses the reaction D-xylose(out) + ATP + H2O = D-xylose(in) + ADP + phosphate + H(+). Part of the ABC transporter complex XylFGH involved in xylose import. Responsible for energy coupling to the transport system. This chain is Xylose import ATP-binding protein XylG, found in Escherichia coli (strain UTI89 / UPEC).